Here is a 150-residue protein sequence, read N- to C-terminus: Nucleoside diphosphate kinase (150 aa).

K10, F58, R86, T92, R103, and N113 together coordinate ATP. H116 serves as the catalytic Pros-phosphohistidine intermediate.

Belongs to the NDK family. Mg(2+) serves as cofactor.

It is found in the cytoplasm. It catalyses the reaction a 2'-deoxyribonucleoside 5'-diphosphate + ATP = a 2'-deoxyribonucleoside 5'-triphosphate + ADP. The catalysed reaction is a ribonucleoside 5'-diphosphate + ATP = a ribonucleoside 5'-triphosphate + ADP. In terms of biological role, major role in the synthesis of nucleoside triphosphates other than ATP. The ATP gamma phosphate is transferred to the NDP beta phosphate via a ping-pong mechanism, using a phosphorylated active-site intermediate. The protein is Nucleoside diphosphate kinase of Methanobrevibacter smithii (strain ATCC 35061 / DSM 861 / OCM 144 / PS).